The following is a 90-amino-acid chain: Bombyxin B-7 (90 aa).

The signal sequence occupies residues 1–20 (MMKTSVMLMLVVVISLMCSG). Disulfide bonds link Cys-30/Cys-76, Cys-42/Cys-89, and Cys-75/Cys-80. A propeptide spans 49 to 67 (GGAQYAPYFWTRQYLGSRG) (c peptide like).

Belongs to the insulin family. As to quaternary structure, heterodimer of a B chain and an A chain linked by two disulfide bonds.

Its subcellular location is the secreted. In terms of biological role, brain peptide responsible for activation of prothoracic glands to produce ecdysone in insects. In Bombyx mori (Silk moth), this protein is Bombyxin B-7 (BBXB7).